We begin with the raw amino-acid sequence, 239 residues long: Putative ABC transporter ATP-binding protein BR1368/BS1330_I1363 (239 aa).

The region spanning Leu-5–Ala-234 is the ABC transporter domain. Gly-37–Thr-44 is an ATP binding site.

It belongs to the ABC transporter superfamily.

It is found in the cell inner membrane. Functionally, probably part of an ABC transporter complex. Responsible for energy coupling to the transport system. The polypeptide is Putative ABC transporter ATP-binding protein BR1368/BS1330_I1363 (Brucella suis biovar 1 (strain 1330)).